Here is a 459-residue protein sequence, read N- to C-terminus: Exodeoxyribonuclease 7 large subunit (459 aa).

Belongs to the XseA family. As to quaternary structure, heterooligomer composed of large and small subunits.

Its subcellular location is the cytoplasm. It catalyses the reaction Exonucleolytic cleavage in either 5'- to 3'- or 3'- to 5'-direction to yield nucleoside 5'-phosphates.. In terms of biological role, bidirectionally degrades single-stranded DNA into large acid-insoluble oligonucleotides, which are then degraded further into small acid-soluble oligonucleotides. This is Exodeoxyribonuclease 7 large subunit from Yersinia pseudotuberculosis serotype O:3 (strain YPIII).